A 225-amino-acid polypeptide reads, in one-letter code: Sugar fermentation stimulation protein homolog (225 aa).

This sequence belongs to the SfsA family.

This chain is Sugar fermentation stimulation protein homolog, found in Sulfolobus acidocaldarius (strain ATCC 33909 / DSM 639 / JCM 8929 / NBRC 15157 / NCIMB 11770).